A 204-amino-acid polypeptide reads, in one-letter code: LexA repressor (204 aa).

Residues 29–49 (VREICKGVGLSSTSSVHGHLS) constitute a DNA-binding region (H-T-H motif). Active-site for autocatalytic cleavage activity residues include Ser-126 and Lys-163.

It belongs to the peptidase S24 family. As to quaternary structure, homodimer.

The enzyme catalyses Hydrolysis of Ala-|-Gly bond in repressor LexA.. Functionally, represses a number of genes involved in the response to DNA damage (SOS response), including recA and lexA. In the presence of single-stranded DNA, RecA interacts with LexA causing an autocatalytic cleavage which disrupts the DNA-binding part of LexA, leading to derepression of the SOS regulon and eventually DNA repair. In Clostridium novyi (strain NT), this protein is LexA repressor.